We begin with the raw amino-acid sequence, 95 residues long: Phospholipase A2 inhibitor gammaCdcPLI (95 aa).

4 cysteine pairs are disulfide-bonded: cysteine 2–cysteine 26, cysteine 5–cysteine 12, cysteine 19–cysteine 30, and cysteine 61–cysteine 77.

Forms dimers or higher order oligomers in a temperature-dependent manner in vitro. In terms of tissue distribution, expressed by the liver.

It localises to the secreted. In terms of biological role, inhibits the enzymatic activity of basic and acidic PLA2 from B.jararacussu and B.pauloensis, respectively, in a dose-dependent manner. Also inhibits myotoxicity and cytotoxicity of BnSp-7 of B.pauloensis. This is Phospholipase A2 inhibitor gammaCdcPLI from Crotalus durissus collilineatus (Brazilian rattlesnake).